We begin with the raw amino-acid sequence, 397 residues long: Elongation factor Tu (397 aa).

The 197-residue stretch at 10-206 (KPHVNIGTIG…AVDTAIPEPE (197 aa)) folds into the tr-type G domain. The G1 stretch occupies residues 19–26 (GHIDHGKT). Position 19–26 (19–26 (GHIDHGKT)) interacts with GTP. T26 contributes to the Mg(2+) binding site. Residues 62–66 (GITIS) are G2. A G3 region spans residues 83-86 (DCPG). Residues 83-87 (DCPGH) and 138-141 (NKAD) contribute to the GTP site. Residues 138–141 (NKAD) form a G4 region. A G5 region spans residues 176–178 (SAL).

It belongs to the TRAFAC class translation factor GTPase superfamily. Classic translation factor GTPase family. EF-Tu/EF-1A subfamily. Monomer.

The protein localises to the cytoplasm. The catalysed reaction is GTP + H2O = GDP + phosphate + H(+). GTP hydrolase that promotes the GTP-dependent binding of aminoacyl-tRNA to the A-site of ribosomes during protein biosynthesis. This chain is Elongation factor Tu, found in Kineococcus radiotolerans (strain ATCC BAA-149 / DSM 14245 / SRS30216).